The primary structure comprises 122 residues: Heat-labile enterotoxin IIB, B chain (122 aa).

Positions 1–23 (MSFKKIIKAFVIMAALVSVQAHA) are cleaved as a signal peptide. Cysteine 33 and cysteine 104 are disulfide-bonded.

As to quaternary structure, heterohexamer of one A chain and of five B chains.

Its function is as follows. The biological activity of the toxin is produced by the A chain, which activates intracellular adenyl cyclase. In Escherichia coli, this protein is Heat-labile enterotoxin IIB, B chain.